A 71-amino-acid chain; its full sequence is Conotoxin LvVIIB (71 aa).

Positions 1-17 (VLIIAVLFLAASELVTA) are cleaved as a signal peptide. The propeptide occupies 18–42 (DYTRDEWQYRAASLRDAMRNFRDTR). 3 disulfides stabilise this stretch: cysteine 43/cysteine 57, cysteine 50/cysteine 62, and cysteine 56/cysteine 69.

Belongs to the conotoxin O1 superfamily. In terms of tissue distribution, expressed by the venom duct.

The protein resides in the secreted. The chain is Conotoxin LvVIIB from Conus lividus (Livid cone).